Here is a 156-residue protein sequence, read N- to C-terminus: Transcription antitermination protein NusB (156 aa).

The protein belongs to the NusB family.

In terms of biological role, involved in transcription antitermination. Required for transcription of ribosomal RNA (rRNA) genes. Binds specifically to the boxA antiterminator sequence of the ribosomal RNA (rrn) operons. This is Transcription antitermination protein NusB from Rickettsia akari (strain Hartford).